A 754-amino-acid polypeptide reads, in one-letter code: 5-methyltetrahydropteroyltriglutamate--homocysteine methyltransferase (754 aa).

5-methyltetrahydropteroyltri-L-glutamate-binding positions include R17 to K20 and K117. L-homocysteine-binding positions include I431 to S433 and E484. L-methionine is bound by residues I431–S433 and E484. Residues R515 to C516 and W561 each bind 5-methyltetrahydropteroyltri-L-glutamate. Residue D599 coordinates L-homocysteine. An L-methionine-binding site is contributed by D599. E605 provides a ligand contact to 5-methyltetrahydropteroyltri-L-glutamate. 3 residues coordinate Zn(2+): H641, C643, and E665. H694 (proton donor) is an active-site residue. Residue C726 participates in Zn(2+) binding.

It belongs to the vitamin-B12 independent methionine synthase family. Zn(2+) serves as cofactor.

It catalyses the reaction 5-methyltetrahydropteroyltri-L-glutamate + L-homocysteine = tetrahydropteroyltri-L-glutamate + L-methionine. It participates in amino-acid biosynthesis; L-methionine biosynthesis via de novo pathway; L-methionine from L-homocysteine (MetE route): step 1/1. Its function is as follows. Catalyzes the transfer of a methyl group from 5-methyltetrahydrofolate to homocysteine resulting in methionine formation. The polypeptide is 5-methyltetrahydropteroyltriglutamate--homocysteine methyltransferase (Salmonella arizonae (strain ATCC BAA-731 / CDC346-86 / RSK2980)).